Here is a 101-residue protein sequence, read N- to C-terminus: Small ribosomal subunit protein uS14 (101 aa).

It belongs to the universal ribosomal protein uS14 family. In terms of assembly, part of the 30S ribosomal subunit. Contacts proteins S3 and S10.

Functionally, binds 16S rRNA, required for the assembly of 30S particles and may also be responsible for determining the conformation of the 16S rRNA at the A site. The chain is Small ribosomal subunit protein uS14 from Aliivibrio fischeri (strain MJ11) (Vibrio fischeri).